The following is a 234-amino-acid chain: Fibronectin type III domain-containing protein 4 (234 aa).

An N-terminal signal peptide occupies residues 1–44 (MPSGCHSSPPSGLRGDMASLVPLSPYLSPTVLLLVSCDLGFVRA). Topologically, residues 45–167 (DRPPSPVNVT…GLDGERPLQT (123 aa)) are extracellular. The region spanning 47–140 (PPSPVNVTVT…PRVHFRTLKG (94 aa)) is the Fibronectin type-III domain. Asparagine 52, asparagine 97, and asparagine 147 each carry an N-linked (GlcNAc...) asparagine glycan. The segment at 122-160 (GLRGESPPGPRVHFRTLKGSDRLPSNSSSPGDITVEGLD) is disordered. A helical membrane pass occupies residues 168–188 (GEVVIIVVVLLMWAAVIGLFC). Topologically, residues 189-234 (RQYDIIKDNDSNNNPKEKGKGPEQSPQGRPVGTRQKKSPSINTIDV) are cytoplasmic. The segment covering 197-209 (NDSNNNPKEKGKG) has biased composition (basic and acidic residues). Residues 197–234 (NDSNNNPKEKGKGPEQSPQGRPVGTRQKKSPSINTIDV) are disordered.

As to expression, highly expressed in the liver and the brain, including in the cortex, hypothalamus and hippocampus. Also expressed in adipose tissue.

Its subcellular location is the membrane. The protein resides in the secreted. In terms of biological role, has anti-inflammatory properties. In the colon, acts on macrophages to down-regulate inflammation. May suppress osteoclastogenesis and mature osteoclast resorptive function. In white adipose tissue, decreases local inflammation, via interaction with GPR116. Also required for proper systemic glucose tolerance, specifically sensitizing white adipocytes to insulin and promoting glucose uptake. The insulin sensitizing function in adipose tissue is mediated by interaction with ADGRF5/GPR116 and activation of cAMP signaling. This Homo sapiens (Human) protein is Fibronectin type III domain-containing protein 4 (FNDC4).